The chain runs to 433 residues: KH domain-containing, RNA-binding, signal transduction-associated protein 1 (433 aa).

Residues Met-1–Met-79 are disordered. Over residues Gly-41 to Ala-76 the composition is skewed to low complexity. The involved in homodimerization stretch occupies residues Glu-82–Met-243. Residues Gln-171–Lys-197 enclose the KH domain. Disordered regions lie at residues Gly-259–Arg-305, Ala-317–Pro-351, and Gln-403–Tyr-433. Pro residues predominate over residues Ala-277–Arg-300. Positions Val-329–Ile-342 are enriched in low complexity. A compositionally biased stretch (basic and acidic residues) spans Ala-424–Tyr-433.

It belongs to the KHDRBS family. In terms of assembly, self-associates to form homooligomers when bound to RNA, oligomerization appears to be limited when binding to proteins. In terms of processing, tyrosine phosphorylated by several non-receptor tyrosine kinases including LCK, FYN and JAK3. Post-translationally, acetylated. Positively correlates with ability to bind RNA. Methylated by HRMT1L2. Required for nuclear localization.

It localises to the nucleus. It is found in the cytoplasm. The protein localises to the membrane. Its function is as follows. Recruited and tyrosine phosphorylated by several receptor systems, for example the T-cell, leptin and insulin receptors. Once phosphorylated, functions as an adapter protein in signal transduction cascades by binding to SH2 and SH3 domain-containing proteins. Role in G2-M progression in the cell cycle. Represses CBP-dependent transcriptional activation apparently by competing with other nuclear factors for binding to CBP. Also acts as a putative regulator of mRNA stability and/or translation rates and mediates mRNA nuclear export. Plays a role in the regulation of alternative splicing and influences mRNA splice site selection and exon inclusion. This is KH domain-containing, RNA-binding, signal transduction-associated protein 1 from Gallus gallus (Chicken).